A 348-amino-acid chain; its full sequence is UDP-3-O-acylglucosamine N-acyltransferase (348 aa).

His-241 serves as the catalytic Proton acceptor.

It belongs to the transferase hexapeptide repeat family. LpxD subfamily. As to quaternary structure, homotrimer.

The catalysed reaction is a UDP-3-O-[(3R)-3-hydroxyacyl]-alpha-D-glucosamine + a (3R)-hydroxyacyl-[ACP] = a UDP-2-N,3-O-bis[(3R)-3-hydroxyacyl]-alpha-D-glucosamine + holo-[ACP] + H(+). It functions in the pathway bacterial outer membrane biogenesis; LPS lipid A biosynthesis. Functionally, catalyzes the N-acylation of UDP-3-O-acylglucosamine using 3-hydroxyacyl-ACP as the acyl donor. Is involved in the biosynthesis of lipid A, a phosphorylated glycolipid that anchors the lipopolysaccharide to the outer membrane of the cell. The polypeptide is UDP-3-O-acylglucosamine N-acyltransferase (Neisseria meningitidis serogroup B (strain ATCC BAA-335 / MC58)).